The chain runs to 416 residues: Adenylosuccinate synthetase (416 aa).

Residues 13-19 (GDEGKGK) and 41-43 (GHT) contribute to the GTP site. Residue Asp14 is the Proton acceptor of the active site. Positions 14 and 41 each coordinate Mg(2+). IMP contacts are provided by residues 14-17 (DEGK), 39-42 (NAGH), Thr126, Arg140, Gln220, Thr235, and Arg299. His42 (proton donor) is an active-site residue. 295–301 (VSTGRKR) serves as a coordination point for substrate. GTP contacts are provided by residues Arg301, 327–329 (KLD), and 405–407 (STS).

This sequence belongs to the adenylosuccinate synthetase family. In terms of assembly, homodimer. Mg(2+) serves as cofactor.

It localises to the cytoplasm. It catalyses the reaction IMP + L-aspartate + GTP = N(6)-(1,2-dicarboxyethyl)-AMP + GDP + phosphate + 2 H(+). Its pathway is purine metabolism; AMP biosynthesis via de novo pathway; AMP from IMP: step 1/2. Functionally, plays an important role in the de novo pathway of purine nucleotide biosynthesis. Catalyzes the first committed step in the biosynthesis of AMP from IMP. The protein is Adenylosuccinate synthetase of Campylobacter lari (strain RM2100 / D67 / ATCC BAA-1060).